Here is a 140-residue protein sequence, read N- to C-terminus: Histone H2B (140 aa).

Positions 1–47 are disordered; that stretch reads MPPKAQKTPTTGGKAPAGKAPVEKKEAGKKTAAPSGEKKKRTKTRKE. The residue at position 7 (Lys-7) is an N6-acetyllysine; alternate. Lys-7 participates in a covalent cross-link: Glycyl lysine isopeptide (Lys-Gly) (interchain with G-Cter in SUMO); alternate. The residue at position 14 (Lys-14) is an N6-acetyllysine. Residue Lys-24 is modified to N6-acetyllysine; alternate. Lys-24 is covalently cross-linked (Glycyl lysine isopeptide (Lys-Gly) (interchain with G-Cter in SUMO); alternate). Lys-25 is covalently cross-linked (Glycyl lysine isopeptide (Lys-Gly) (interchain with G-Cter in SUMO)). Lys-134 is covalently cross-linked (Glycyl lysine isopeptide (Lys-Gly) (interchain with G-Cter in ubiquitin)).

This sequence belongs to the histone H2B family. In terms of assembly, the nucleosome is a histone octamer containing two molecules each of H2A, H2B, H3 and H4 assembled in one H3-H4 heterotetramer and two H2A-H2B heterodimers. The octamer wraps approximately 147 bp of DNA. Post-translationally, monoubiquitinated by BRE1 to form H2BK123ub1. H2BK123ub1 gives a specific tag for epigenetic transcriptional activation and is also prerequisite for H3K4me and H3K79me formation. H2BK123ub1 also modulates the formation of double-strand breaks during meiosis and is a prerequisite for DNA-damage checkpoint activation. In terms of processing, acetylated by GCN5 to form H2BK11ac and H2BK16ac. H2BK16ac can also be formed by ESA1. Acetylation of N-terminal lysines and particularly formation of H2BK11acK16ac has a positive effect on transcription. Sumoylation to form H2BK6su and probably also H2BK16su or H2BK17su, occurs preferentially near the telomeres and represses gene transcription.

Its subcellular location is the nucleus. It is found in the chromosome. Functionally, core component of nucleosome. Nucleosomes wrap and compact DNA into chromatin, limiting DNA accessibility to the cellular machineries which require DNA as a template. Histones thereby play a central role in transcription regulation, DNA repair, DNA replication and chromosomal stability. DNA accessibility is regulated via a complex set of post-translational modifications of histones, also called histone code, and nucleosome remodeling. The chain is Histone H2B (HTB1) from Phaeosphaeria nodorum (strain SN15 / ATCC MYA-4574 / FGSC 10173) (Glume blotch fungus).